Here is a 468-residue protein sequence, read N- to C-terminus: MDYLPIFCRLDNKPVLLVGGGEVAERKARLLLDAGAQLTVVAPELDPELAELAANGSIEWLAGEFAPQQLTGKWLVVAATDRREVNALVYQSANQARIFANVVDDPKRSSFIMPSIIDRSPLMVAISSGGKAPVLARLLREKLEALLPQHLGAVAAFAGSLRERVKARFASMGERRRFWERLLGADRLGQALARGDSASANQLADSLFADESQSGGEVVLVGAGPGDPGLLTLHALRQMQQADVVVYDRLVSDEVMALVRRDARRIFVGKQAGNHCVPQEGINQLLLDEAKKGQRVVRLKGGDPFIFGRGGEELETLVGSGIGFQVVPGITAASGCAAYAGIPLTHRDHAQSVRFVTAHGKGGAQDLDWPLLAKDKQTLVFYMGLSSCTTIREQLLTHGKAGDTPVALIERGTQPSQRVIRGTLAQLPELALGVESPALIMVGSVVTLADQLAWFGQGGAADAALASA.

The tract at residues 1–204 is precorrin-2 dehydrogenase /sirohydrochlorin ferrochelatase; that stretch reads MDYLPIFCRL…GDSASANQLA (204 aa). NAD(+)-binding positions include 22 to 23 and 43 to 44; these read EV and PE. Ser128 carries the post-translational modification Phosphoserine. Residues 216 to 468 form a uroporphyrinogen-III C-methyltransferase region; sequence GEVVLVGAGP…GAADAALASA (253 aa). Residue Pro225 participates in S-adenosyl-L-methionine binding. Catalysis depends on Asp248, which acts as the Proton acceptor. Lys270 functions as the Proton donor in the catalytic mechanism. Residues 301–303, Ile306, 331–332, Met383, and Gly412 contribute to the S-adenosyl-L-methionine site; these read GGD and TA.

This sequence in the N-terminal section; belongs to the precorrin-2 dehydrogenase / sirohydrochlorin ferrochelatase family. It in the C-terminal section; belongs to the precorrin methyltransferase family.

It carries out the reaction uroporphyrinogen III + 2 S-adenosyl-L-methionine = precorrin-2 + 2 S-adenosyl-L-homocysteine + H(+). The enzyme catalyses precorrin-2 + NAD(+) = sirohydrochlorin + NADH + 2 H(+). It catalyses the reaction siroheme + 2 H(+) = sirohydrochlorin + Fe(2+). Its pathway is cofactor biosynthesis; adenosylcobalamin biosynthesis; precorrin-2 from uroporphyrinogen III: step 1/1. It participates in cofactor biosynthesis; adenosylcobalamin biosynthesis; sirohydrochlorin from precorrin-2: step 1/1. It functions in the pathway porphyrin-containing compound metabolism; siroheme biosynthesis; precorrin-2 from uroporphyrinogen III: step 1/1. The protein operates within porphyrin-containing compound metabolism; siroheme biosynthesis; siroheme from sirohydrochlorin: step 1/1. Its pathway is porphyrin-containing compound metabolism; siroheme biosynthesis; sirohydrochlorin from precorrin-2: step 1/1. Its function is as follows. Multifunctional enzyme that catalyzes the SAM-dependent methylations of uroporphyrinogen III at position C-2 and C-7 to form precorrin-2 via precorrin-1. Then it catalyzes the NAD-dependent ring dehydrogenation of precorrin-2 to yield sirohydrochlorin. Finally, it catalyzes the ferrochelation of sirohydrochlorin to yield siroheme. The polypeptide is Siroheme synthase 3 (Aeromonas hydrophila subsp. hydrophila (strain ATCC 7966 / DSM 30187 / BCRC 13018 / CCUG 14551 / JCM 1027 / KCTC 2358 / NCIMB 9240 / NCTC 8049)).